Reading from the N-terminus, the 498-residue chain is MYVSSLLFLYASESYESFIFHFQMCYNKAHNGFMPSIFQQLKGLGEGLQWKVGISLDHQEKQTSSHEKEMTSPNSATRLIPSDWRRELLAGTVSFFAAVYIIIVNSSILADAGIPQEAGIIATILASAIGCFIMGLWGNAPLVIVPGMGINAMFTYTLVQGMGLTWQQALAAVMMSGICFFAISMTSLVEKLRTAIPASLQEAISVGIGLMLVLIGLHKGGVIASDRSSVIAVQSFADPGVLVTLATLALTCILYIRKVPGNLLLAIIGGSALAYLFKAVPSKAATGVGGSSWSSYGDLFGQLSVKGASITTLVIAVFSLTLVIVFENVGLINAQLKMSGRTERFKRVTQATSLTVILSGIFGTSPTVSTVEAAAGISAGGRTGWASIATGTLFLLSFIAMPVITLVPDQAVAPILIFIGGLMMPAVRHISFERMEEGLPAFFIIAFIPLMHSIVDGIAIGFISYALFHIAVGKWREVKPLFYIISLLFVMHFVLQTM.

Transmembrane regions (helical) follow at residues 88–108, 118–138, 142–162, 169–189, 203–223, 236–256, 259–279, 312–332, 357–377, 388–408, 412–432, 443–463, and 478–498; these read LLAG…NSSI, AGII…GLWG, LVIV…VQGM, ALAA…TSLV, AISV…GGVI, FADP…ILYI, VPGN…LFKA, TLVI…VGLI, ILSG…AAGI, IATG…TLVP, VAPI…HISF, FIIA…IGFI, and VKPL…LQTM.

It belongs to the nucleobase:cation symporter-2 (NCS2) (TC 2.A.40) family. Azg-like subfamily.

The protein resides in the cell membrane. With respect to regulation, inhibited by the proton gradient disruptor carbonyl cyanide m-chlorophenylhydrazone (CCCP), but not by the sodium gradient disruptor ouabain. Transports adenine, guanine, hypoxanthine, xanthine, cytosine and uracil. Transport is probably proton-dependent. In Paenibacillus larvae subsp. larvae (strain NRRL B-3650 / LMG 16245), this protein is Nucleobase transporter PlAzg2.